Consider the following 200-residue polypeptide: Holliday junction branch migration complex subunit RuvA (200 aa).

The domain I stretch occupies residues 1-63 (MYAYVKGKLT…EDAQLLYGFS (63 aa)). The segment at 64 to 142 (SEEEKDMFLS…ITEEDSDSLL (79 aa)) is domain II. A flexible linker region spans residues 143 to 149 (QVDATST). The tract at residues 150–200 (EQDQFVQEAMLALEALGYSKRELAKVEKTLNKNKYDSVDEAVKAGLQLVVS) is domain III.

The protein belongs to the RuvA family. Homotetramer. Forms an RuvA(8)-RuvB(12)-Holliday junction (HJ) complex. HJ DNA is sandwiched between 2 RuvA tetramers; dsDNA enters through RuvA and exits via RuvB. An RuvB hexamer assembles on each DNA strand where it exits the tetramer. Each RuvB hexamer is contacted by two RuvA subunits (via domain III) on 2 adjacent RuvB subunits; this complex drives branch migration. In the full resolvosome a probable DNA-RuvA(4)-RuvB(12)-RuvC(2) complex forms which resolves the HJ.

It is found in the cytoplasm. In terms of biological role, the RuvA-RuvB-RuvC complex processes Holliday junction (HJ) DNA during genetic recombination and DNA repair, while the RuvA-RuvB complex plays an important role in the rescue of blocked DNA replication forks via replication fork reversal (RFR). RuvA specifically binds to HJ cruciform DNA, conferring on it an open structure. The RuvB hexamer acts as an ATP-dependent pump, pulling dsDNA into and through the RuvAB complex. HJ branch migration allows RuvC to scan DNA until it finds its consensus sequence, where it cleaves and resolves the cruciform DNA. The protein is Holliday junction branch migration complex subunit RuvA of Staphylococcus aureus (strain MRSA252).